Consider the following 1946-residue polypeptide: MNNLFKFLFVLLAIFCPPISDLVVSHGVPQQHITIIKFTTNFAFRTTFYKTSSSSIVIGEKITLGTLTFGDGSSTSVRASVTSFDTKNDWFFGQFIFTKTYTALTPNNSKQYLAMFTSCCRISTLLNNKDADWNITSSVYLDNKNWPSVNHSPVSGMLPIVQVIANKNNNFRVIASDPNVDDKLSFSFSTVYPMTQPSGMKINSTGHVFFLPTSVGLYSTQIYITDDAVPPAYAVVDFILESITEPGKCDPSCSNGGATCNGNSECKNCANAGSTTSNTCSTTNYPPYFVSPTPQDNQLIPFTVGQPNSITLSCKSDYTTRTVGIQAANVPAGAAIAEGTSSQGTVKNILSWTPVAANVGVYVTSIFCYDSNGLTSSSRSFTIFIAKPECGNGHKDPSTGKCKCDGDKWDPTSNCFDCSTGYYGQNCDPTPPCDKGIPNEGILGDGKCMCINGYSGDKCDVPLSQSCKDLKNSILLSTSVPSFFVNPTKVQLYIESDFALTTSLNIPQKLTKIDVFVLVDVNVASSTLFGVVQSSISTFVTEVSKSICETTQFGIGYFSDASSSGFNFAPGSIIGSNIVNTINGYAVSSYTSTSSGNSLLGATNAASNSNGWNSGSFKAIVVLTDKDHSSNSAAITNFVNTYISNSIAPVVVGFGASSIPNWNSAISTADFGYSTVSAATSIDISAKAVAGLKSVLSNVVYKTDNTTNGASFVKSTPSDVAVSSTADTVKTVSGLVLTKPSATSIVSPVASVSAIGFGQTDFSINYNRPPTPTGTAFSVNQNSFATFKLTGTDPDFNILTFAFTTFLTSDVGVITDSNNKDVSTQKSKYYDSTETFTFTPAINYLLPISVSFVANDGCLNSTTSATVSITINKVNQLPTCQQKTISPTLNVANKFVLSASDFEDATPFIQFTSPTDLTAYGTLTFGGVAVTSTSKIPTSSEITFTQTVNPTNAIDVPVSFQAVDSVGAISTSTCTLTVKLVHTNIKPVSSSTSPISVIPRGSVSLTLVSTDSDSTSAKFTIKSVNKGAKGDFYTCSTNDCTCNSTQTNIYTSISTTTTYTSISYTNKVANKLICFTNGEPSAISNYASISFTSTDNQGLESDSVNVVVNIVGNRTNVAPVVTKIQGYSVYQDYLDSDAHVVTGTDADIDDYNPPNVNNLIAIITTPPSNGILVTLQNGSIAATQGKAPFTHYYRPNPGFKGTDSYSYQVVDTFKAGSSIESTTVTVNPINHKPSVVVSSYSFTSQSGDGETQDLVTSDPDGDSVICSVVSIPSQIGMYDSDGNLIESVPTVLSGTSYSFKLLDPSKITPTPFTSVSSSFAVKCTDVTTKTIPFGTLSTGVVTANVQYTYINTPPTTQGGTVQLDQDTVKVFTFNGSDIETPKDDIKVKILSLPINGQLLINATGVALTTTNIASETYNLNALSYKPNAGLSNWNTIDQQSPLDSISYTVIDQQGLTSDSDIVYFSVRPRNPPVYTGARVIDVLQNTRYPLTITSRIGGGGSEVNIQVIGFTNNGTLSIAHNMGSEGTMDSEITSYPNQQSGSTSYNYAYMPPRNKYGNDFDFIYFKLFDGDLYSELYTVTVNVIHVNQPPTIELVSYKILDGVSSEVLFENTSLINMNINTTVLIKYSGNDIDVDQVTPLISMIPNFPLRGSLYAYNPTASNSSGAPITRNSSNVEQNADGFYYVVFVPSKKTSGESYARITFIMTDNGGLNSPIVGVLINVNTVNIAPFVIIGNKNYTTQTNLTASVMGVQFDDPDSTTNNVSIVVSIVGQKDDKVASLKDIKLSFTQSPMCEYHQTLASITCIGPKKPLNSSIVSISVIASTAGDYRLKLFVDDLGYNAPSAIRAQSHLNATGYVDVKVNAPEATTQTTNNKTVLTGAIAGAAAGTALIAAAAWKLLRKAAPPTDTFFSEAAFLGDGVNANPLYEQSASAAENPLYQSASDNTD.

Positions 1-22 (MNNLFKFLFVLLAIFCPPISDL) are cleaved as a signal peptide. Residues 23-1875 (VVSHGVPQQH…ATTQTTNNKT (1853 aa)) are Extracellular-facing. N-linked (GlcNAc...) asparagine glycans are attached at residues Asn-107, Asn-134, and Asn-203. The 38-residue stretch at 423-460 (YGQNCDPTPPCDKGIPNEGILGDGKCMCINGYSGDKCD) folds into the EGF-like domain. 2 disulfide bridges follow: Cys-433–Cys-448 and Cys-450–Cys-459. The VWFA domain occupies 514–699 (DVFVLVDVNV…AGLKSVLSNV (186 aa)). N-linked (GlcNAc...) asparagine glycosylation is found at Asn-705, Asn-860, Asn-1043, Asn-1113, Asn-1177, Asn-1374, Asn-1401, Asn-1513, Asn-1611, Asn-1620, Asn-1662, Asn-1671, Asn-1737, Asn-1743, Asn-1762, Asn-1812, Asn-1852, and Asn-1873. The helical transmembrane segment at 1876–1896 (VLTGAIAGAAAGTALIAAAAW) threads the bilayer. Over 1897–1946 (KLLRKAAPPTDTFFSEAAFLGDGVNANPLYEQSASAAENPLYQSASDNTD) the chain is Cytoplasmic.

Belongs to the SIB family. In terms of assembly, interacts with talA/talin.

Its subcellular location is the membrane. In terms of biological role, implicated in cellular adhesion. The polypeptide is Integrin beta-like protein E (sibE) (Dictyostelium discoideum (Social amoeba)).